The sequence spans 151 residues: UPAR/Ly6 domain-containing protein rtv (151 aa).

The N-terminal stretch at 1–19 is a signal peptide; it reads MQFTSLLLAVIFLISLVSI. At 20 to 125 the chain is on the extracellular side; it reads DGLLRRCYQC…QGDLCNGARS (106 aa). 5 disulfides stabilise this stretch: Cys26/Cys65, Cys29/Cys38, Cys60/Cys88, Cys100/Cys113, and Cys115/Cys120. A glycan (N-linked (GlcNAc...) asparagine) is linked at Asn45. The GPI-anchor amidated asparagine moiety is linked to residue Asn121. Residues 122 to 151 constitute a propeptide, removed in mature form; the sequence is GARSWSSAPQMILITMLPLLGSWLLQRMRN. A helical transmembrane segment spans residues 126–146; it reads WSSAPQMILITMLPLLGSWLL. Over 147 to 151 the chain is Cytoplasmic; that stretch reads QRMRN.

It belongs to the quiver family.

It localises to the cell membrane. Functionally, required for chitin fiber assembly and organization involved in cuticle formation and tracheal development. The protein is UPAR/Ly6 domain-containing protein rtv of Drosophila melanogaster (Fruit fly).